Consider the following 229-residue polypeptide: ATP synthase subunit a (229 aa).

A run of 6 helical transmembrane segments spans residues 16-36 (YAHV…GAAA), 81-101 (YIPF…LGMI), 110-130 (NMNT…FQGV), 142-162 (FMGP…VSHI), 175-195 (VMMG…IGVP), and 196-216 (IPFY…FTLL).

It belongs to the ATPase A chain family. As to quaternary structure, F-type ATPases have 2 components, CF(1) - the catalytic core - and CF(0) - the membrane proton channel. CF(1) has five subunits: alpha(3), beta(3), gamma(1), delta(1), epsilon(1). CF(0) has three main subunits: a(1), b(2) and c(9-12). The alpha and beta chains form an alternating ring which encloses part of the gamma chain. CF(1) is attached to CF(0) by a central stalk formed by the gamma and epsilon chains, while a peripheral stalk is formed by the delta and b chains.

The protein localises to the cell inner membrane. Key component of the proton channel; it plays a direct role in the translocation of protons across the membrane. The chain is ATP synthase subunit a from Bdellovibrio bacteriovorus (strain ATCC 15356 / DSM 50701 / NCIMB 9529 / HD100).